The chain runs to 130 residues: Small ribosomal subunit protein uS8 (130 aa).

Belongs to the universal ribosomal protein uS8 family. As to quaternary structure, part of the 30S ribosomal subunit. Contacts proteins S5 and S12.

In terms of biological role, one of the primary rRNA binding proteins, it binds directly to 16S rRNA central domain where it helps coordinate assembly of the platform of the 30S subunit. This chain is Small ribosomal subunit protein uS8, found in Aeromonas hydrophila subsp. hydrophila (strain ATCC 7966 / DSM 30187 / BCRC 13018 / CCUG 14551 / JCM 1027 / KCTC 2358 / NCIMB 9240 / NCTC 8049).